Here is a 201-residue protein sequence, read N- to C-terminus: Small ribosomal subunit protein uS4 (201 aa).

The region spanning 93-153 is the S4 RNA-binding domain; the sequence is QRLDNIVYRL…EKSKNLVIIK (61 aa).

It belongs to the universal ribosomal protein uS4 family. Part of the 30S ribosomal subunit. Contacts protein S5. The interaction surface between S4 and S5 is involved in control of translational fidelity.

Its function is as follows. One of the primary rRNA binding proteins, it binds directly to 16S rRNA where it nucleates assembly of the body of the 30S subunit. With S5 and S12 plays an important role in translational accuracy. The sequence is that of Small ribosomal subunit protein uS4 from Latilactobacillus sakei subsp. sakei (strain 23K) (Lactobacillus sakei subsp. sakei).